A 300-amino-acid chain; its full sequence is Probable amino-acid ABC transporter periplasmic-binding protein y4tE (300 aa).

An N-terminal signal peptide occupies residues 1-27; that stretch reads MTHLKISKTAPAVARFLPAGRIASVAA.

This sequence belongs to the bacterial solute-binding protein 3 family.

The protein localises to the periplasm. Functionally, probably part of the binding-protein-dependent transport system y4tEFGH for an amino acid. The sequence is that of Probable amino-acid ABC transporter periplasmic-binding protein y4tE from Sinorhizobium fredii (strain NBRC 101917 / NGR234).